We begin with the raw amino-acid sequence, 475 residues long: Probable pectate lyase 7 (475 aa).

An N-terminal signal peptide occupies residues 1-24 (METARLFKLVCVICIASLIPTIRA). N-linked (GlcNAc...) asparagine glycans are attached at residues asparagine 67 and asparagine 96. The tract at residues 91–117 (ISSPTNSTRRSLTGRGKGKGKGKWSKL) is disordered. 3 residues coordinate Ca(2+): aspartate 271, aspartate 295, and aspartate 299. Arginine 351 is a catalytic residue.

The protein belongs to the polysaccharide lyase 1 family. The cofactor is Ca(2+).

It carries out the reaction Eliminative cleavage of (1-&gt;4)-alpha-D-galacturonan to give oligosaccharides with 4-deoxy-alpha-D-galact-4-enuronosyl groups at their non-reducing ends.. It participates in glycan metabolism; pectin degradation; 2-dehydro-3-deoxy-D-gluconate from pectin: step 2/5. This chain is Probable pectate lyase 7, found in Arabidopsis thaliana (Mouse-ear cress).